Reading from the N-terminus, the 592-residue chain is Aspartate--tRNA ligase (592 aa).

Position 171 (Glu-171) interacts with L-aspartate. The segment at 195-198 (QLFK) is aspartate. Position 217 (Arg-217) interacts with L-aspartate. Residues 217–219 (RDE) and Gln-226 each bind ATP. Residue His-448 participates in L-aspartate binding. Glu-482 contributes to the ATP binding site. Residue Arg-489 participates in L-aspartate binding. 534–537 (GLDR) serves as a coordination point for ATP.

Belongs to the class-II aminoacyl-tRNA synthetase family. Type 1 subfamily. Homodimer.

It is found in the cytoplasm. It catalyses the reaction tRNA(Asp) + L-aspartate + ATP = L-aspartyl-tRNA(Asp) + AMP + diphosphate. Its function is as follows. Catalyzes the attachment of L-aspartate to tRNA(Asp) in a two-step reaction: L-aspartate is first activated by ATP to form Asp-AMP and then transferred to the acceptor end of tRNA(Asp). The polypeptide is Aspartate--tRNA ligase (Vibrio atlanticus (strain LGP32) (Vibrio splendidus (strain Mel32))).